Consider the following 907-residue polypeptide: Protein translocase subunit SecA (907 aa).

Residues glutamine 87, 105 to 109 (GEGKT), and aspartate 510 contribute to the ATP site. Cysteine 892, cysteine 894, cysteine 903, and histidine 904 together coordinate Zn(2+).

Belongs to the SecA family. As to quaternary structure, monomer and homodimer. Part of the essential Sec protein translocation apparatus which comprises SecA, SecYEG and auxiliary proteins SecDF-YajC and YidC. Zn(2+) serves as cofactor.

It is found in the cell inner membrane. The protein resides in the cytoplasm. It carries out the reaction ATP + H2O + cellular proteinSide 1 = ADP + phosphate + cellular proteinSide 2.. Part of the Sec protein translocase complex. Interacts with the SecYEG preprotein conducting channel. Has a central role in coupling the hydrolysis of ATP to the transfer of proteins into and across the cell membrane, serving both as a receptor for the preprotein-SecB complex and as an ATP-driven molecular motor driving the stepwise translocation of polypeptide chains across the membrane. The polypeptide is Protein translocase subunit SecA (Acinetobacter baumannii (strain ACICU)).